The primary structure comprises 87 residues: Small ribosomal subunit protein bS20 (87 aa).

Residues M1–S26 form a disordered region.

The protein belongs to the bacterial ribosomal protein bS20 family.

Binds directly to 16S ribosomal RNA. This chain is Small ribosomal subunit protein bS20, found in Salmonella typhi.